A 346-amino-acid polypeptide reads, in one-letter code: Isopentenyl-diphosphate delta-isomerase (346 aa).

12 to 13 (RK) is a substrate binding site. FMN-binding positions include 67 to 69 (ALT), Ser-97, and Asn-126. 97 to 99 (SQR) contacts substrate. Gln-156 contacts substrate. Glu-157 lines the Mg(2+) pocket. FMN contacts are provided by residues Lys-188, Thr-218, 263-265 (GIR), and 284-285 (AG).

This sequence belongs to the IPP isomerase type 2 family. In terms of assembly, homooctamer. Dimer of tetramers. FMN is required as a cofactor. Requires NADPH as cofactor. The cofactor is Mg(2+).

The protein localises to the cytoplasm. The enzyme catalyses isopentenyl diphosphate = dimethylallyl diphosphate. In terms of biological role, involved in the biosynthesis of isoprenoids. Catalyzes the 1,3-allylic rearrangement of the homoallylic substrate isopentenyl (IPP) to its allylic isomer, dimethylallyl diphosphate (DMAPP). The sequence is that of Isopentenyl-diphosphate delta-isomerase from Moorella thermoacetica (strain ATCC 39073 / JCM 9320).